The chain runs to 428 residues: Divalent metal cation transporter MntH (428 aa).

Helical transmembrane passes span 33–53 (WYLL…GNVA), 60–80 (AQFG…AALV), 114–134 (QAEI…AIAL), 136–156 (IMFN…SLLL), 171–191 (VITA…FVVT), 210–230 (SVLL…VYLH), 258–278 (VGLA…VAAL), 299–319 (TLGA…GLAS), 334–356 (LLHW…LAIL), 365–385 (TLVL…LPLV), and 406–426 (VGWV…YLTV).

It belongs to the NRAMP family.

The protein localises to the cell membrane. Its function is as follows. H(+)-stimulated, divalent metal cation uptake system. Transports zinc and iron. Can also interact with manganese and copper. This Mycobacterium tuberculosis (strain CDC 1551 / Oshkosh) protein is Divalent metal cation transporter MntH.